Here is a 192-residue protein sequence, read N- to C-terminus: VQ motif-containing protein 22 (192 aa).

Low complexity predominate over residues 24–38 (ASTAVTTTTAGDTTS). Positions 24–65 (ASTAVTTTTAGDTTSIDSRLSPETGRVTKPTRRRSRASRRTP) are disordered. The span at 52–62 (KPTRRRSRASR) shows a compositional bias: basic residues. The short motif at 76–85 (FRAMVQQYTG) is the VQ element. Disordered stretches follow at residues 101 to 135 (FSLT…PQRP) and 163 to 192 (FGTV…SRLQ). Composition is skewed to low complexity over residues 102–114 (SLTS…AGSS) and 175–192 (APSS…SRLQ).

The protein resides in the nucleus. Functionally, may function as positive regulator of plant growth. This Arabidopsis thaliana (Mouse-ear cress) protein is VQ motif-containing protein 22.